A 54-amino-acid chain; its full sequence is Large ribosomal subunit protein bL33 (54 aa).

This sequence belongs to the bacterial ribosomal protein bL33 family.

The polypeptide is Large ribosomal subunit protein bL33 (Stenotrophomonas maltophilia (strain K279a)).